A 509-amino-acid chain; its full sequence is ATP synthase subunit alpha (509 aa).

169–176 (GDRQTGKT) contributes to the ATP binding site.

Belongs to the ATPase alpha/beta chains family. F-type ATPases have 2 components, CF(1) - the catalytic core - and CF(0) - the membrane proton channel. CF(1) has five subunits: alpha(3), beta(3), gamma(1), delta(1), epsilon(1). CF(0) has three main subunits: a(1), b(2) and c(9-12). The alpha and beta chains form an alternating ring which encloses part of the gamma chain. CF(1) is attached to CF(0) by a central stalk formed by the gamma and epsilon chains, while a peripheral stalk is formed by the delta and b chains.

It is found in the cell inner membrane. It carries out the reaction ATP + H2O + 4 H(+)(in) = ADP + phosphate + 5 H(+)(out). In terms of biological role, produces ATP from ADP in the presence of a proton gradient across the membrane. The alpha chain is a regulatory subunit. In Zymomonas mobilis subsp. mobilis (strain ATCC 31821 / ZM4 / CP4), this protein is ATP synthase subunit alpha.